We begin with the raw amino-acid sequence, 576 residues long: 2-succinyl-5-enolpyruvyl-6-hydroxy-3-cyclohexene-1-carboxylate synthase (576 aa).

This sequence belongs to the TPP enzyme family. MenD subfamily. In terms of assembly, homodimer. Mg(2+) serves as cofactor. It depends on Mn(2+) as a cofactor. The cofactor is thiamine diphosphate.

It catalyses the reaction isochorismate + 2-oxoglutarate + H(+) = 5-enolpyruvoyl-6-hydroxy-2-succinyl-cyclohex-3-ene-1-carboxylate + CO2. Its pathway is quinol/quinone metabolism; 1,4-dihydroxy-2-naphthoate biosynthesis; 1,4-dihydroxy-2-naphthoate from chorismate: step 2/7. It functions in the pathway quinol/quinone metabolism; menaquinone biosynthesis. Catalyzes the thiamine diphosphate-dependent decarboxylation of 2-oxoglutarate and the subsequent addition of the resulting succinic semialdehyde-thiamine pyrophosphate anion to isochorismate to yield 2-succinyl-5-enolpyruvyl-6-hydroxy-3-cyclohexene-1-carboxylate (SEPHCHC). The sequence is that of 2-succinyl-5-enolpyruvyl-6-hydroxy-3-cyclohexene-1-carboxylate synthase from Aliivibrio fischeri (strain ATCC 700601 / ES114) (Vibrio fischeri).